The sequence spans 299 residues: NAD(+) hydrolase PdTIR (299 aa).

Positions 164-297 (PPHDIFISHA…EIVADLMAII (134 aa)) constitute a TIR domain. Residues 173 to 174 (AW) and Arg203 contribute to the NAD(+) site. Glu239 is an active-site residue.

In terms of assembly, homodimer. Interacts with host MYD88.

The catalysed reaction is NAD(+) + H2O = ADP-D-ribose + nicotinamide + H(+). In terms of biological role, NAD(+) hydrolase (NADase) that catalyzes cleavage of NAD(+) into ADP-D-ribose (ADPR) and nicotinamide. The chain is NAD(+) hydrolase PdTIR from Paracoccus denitrificans (strain Pd 1222).